Reading from the N-terminus, the 399-residue chain is DJ-1 protein homolog F (399 aa).

PfpI endopeptidase domains lie at 7-199 (KSVL…ESLG) and 211-394 (TSLL…TALG).

Belongs to the peptidase C56 family. As to quaternary structure, homotrimer.

Its function is as follows. May be involved in oxidative stress response. The chain is DJ-1 protein homolog F (DJ1F) from Arabidopsis thaliana (Mouse-ear cress).